The primary structure comprises 197 residues: LexA repressor (197 aa).

The segment at residues 28-47 (VREIARRFRITPRGAQLHLV) is a DNA-binding region (H-T-H motif). Residues Ser-119 and Lys-156 each act as for autocatalytic cleavage activity in the active site.

Belongs to the peptidase S24 family. Homodimer.

It carries out the reaction Hydrolysis of Ala-|-Gly bond in repressor LexA.. In terms of biological role, represses a number of genes involved in the response to DNA damage (SOS response), including recA and lexA. In the presence of single-stranded DNA, RecA interacts with LexA causing an autocatalytic cleavage which disrupts the DNA-binding part of LexA, leading to derepression of the SOS regulon and eventually DNA repair. The chain is LexA repressor from Thermotoga neapolitana.